Here is a 1113-residue protein sequence, read N- to C-terminus: Protein translocase subunit SecA (1113 aa).

ATP-binding positions include Q175, 193 to 197 (GEGKT), and D694. The segment covering 1042–1072 (RHAAEQRTDMSKYRTQKDDIEAQQKAQRDAA) has biased composition (basic and acidic residues). Residues 1042 to 1113 (RHAAEQRTDM…KFKQCHGRNL (72 aa)) form a disordered region. Zn(2+)-binding residues include C1097, C1099, C1108, and H1109. The span at 1103–1113 (KKFKQCHGRNL) shows a compositional bias: basic residues.

Belongs to the SecA family. In terms of assembly, monomer and homodimer. Part of the essential Sec protein translocation apparatus which comprises SecA, SecYEG and auxiliary proteins SecDF. Other proteins may also be involved. It depends on Zn(2+) as a cofactor.

Its subcellular location is the cell inner membrane. It is found in the cytoplasm. The enzyme catalyses ATP + H2O + cellular proteinSide 1 = ADP + phosphate + cellular proteinSide 2.. Part of the Sec protein translocase complex. Interacts with the SecYEG preprotein conducting channel. Has a central role in coupling the hydrolysis of ATP to the transfer of proteins into and across the cell membrane, serving as an ATP-driven molecular motor driving the stepwise translocation of polypeptide chains across the membrane. This chain is Protein translocase subunit SecA, found in Porphyromonas gingivalis (strain ATCC 33277 / DSM 20709 / CIP 103683 / JCM 12257 / NCTC 11834 / 2561).